The chain runs to 198 residues: MFITYLLLIVAYLLGSIPFALVVGKIGYGIDIREHGSGNLGGTNTFRTLGKKAGFIVTIADILKGTLATGLPLIFSLDIHPLLFGLAAVLGHVYPIFARFRGGKAVATSAGVLLCYAPIIFAILAVVFFTLLFTTRYVSLSSMVTAIAAVIASIVNGDKIFIVAMCLLAGMVIYRHRANIGRIINKTEPKANFTKKQK.

The next 5 helical transmembrane spans lie at 2–22 (FITY…FALV), 53–75 (AGFI…PLIF), 79–98 (IHPL…PIFA), 113–133 (LLCY…TLLF), and 147–167 (IAAV…AMCL).

The protein belongs to the PlsY family. As to quaternary structure, probably interacts with PlsX.

The protein resides in the cell membrane. It catalyses the reaction an acyl phosphate + sn-glycerol 3-phosphate = a 1-acyl-sn-glycero-3-phosphate + phosphate. The protein operates within lipid metabolism; phospholipid metabolism. Catalyzes the transfer of an acyl group from acyl-phosphate (acyl-PO(4)) to glycerol-3-phosphate (G3P) to form lysophosphatidic acid (LPA). This enzyme utilizes acyl-phosphate as fatty acyl donor, but not acyl-CoA or acyl-ACP. The protein is Glycerol-3-phosphate acyltransferase of Bacillus cytotoxicus (strain DSM 22905 / CIP 110041 / 391-98 / NVH 391-98).